The sequence spans 412 residues: Stachydrine N-demethylase (412 aa).

The Rieske domain occupies 45 to 150 (LYAVPVCQLA…LRNLDGLIYI (106 aa)). Residues C86, H88, C106, and H109 each contribute to the [2Fe-2S] cluster site. Fe cation-binding residues include H204, H209, and D360.

The protein belongs to the bacterial ring-hydroxylating dioxygenase alpha subunit family. Homotrimer. The system is probably composed of an oxygenase subunit (Stc2) and two reductase subunits (Stc3 and Stc4). It depends on [2Fe-2S] cluster as a cofactor. Fe cation is required as a cofactor.

The enzyme catalyses L-proline betaine + NADH + O2 + H(+) = N-methyl-L-proline + formaldehyde + NAD(+) + H2O. The catalysed reaction is L-proline betaine + NADPH + O2 + H(+) = N-methyl-L-proline + formaldehyde + NADP(+) + H2O. In terms of biological role, monooxygenase involved in the catabolism of stachydrine (L-proline betaine), a source of carbon and nitrogen. Part of a Rieske-type oxygenase system that catalyzes the demethylation of stachydrine to produce N-methyl-L-proline (monomethylproline). Stc2 is the catalytic subunit. The polypeptide is Stachydrine N-demethylase (Rhizobium meliloti (strain 1021) (Ensifer meliloti)).